The primary structure comprises 798 residues: Transferrin receptor protein 2 (798 aa).

At 1–81 (MEQRWGLLRR…WAAAGRKAAP (81 aa)) the chain is on the cytoplasmic side. An Endocytosis signal motif is present at residues 23–26 (YRRV). Residues 82 to 102 (YLVLITLLIFTGAFLLGYVAF) form a helical; Signal-anchor for type II membrane protein membrane-spanning segment. Over 103 to 798 (RGSCQACGDS…GDVWNIDNNF (696 aa)) the chain is Extracellular. 3 N-linked (GlcNAc...) asparagine glycosylation sites follow: asparagine 235, asparagine 334, and asparagine 535.

The protein belongs to the peptidase M28 family. M28B subfamily. As to expression, predominantly expressed in liver. Also expressed in kidney, spleen, brain, lung, heart and muscle with very low expression in kidney, muscle and heart.

Its subcellular location is the cell membrane. It is found in the cytoplasm. Mediates cellular uptake of transferrin-bound iron in a non-iron dependent manner. May be involved in iron metabolism, hepatocyte function and erythrocyte differentiation. The chain is Transferrin receptor protein 2 (Tfr2) from Mus musculus (Mouse).